The primary structure comprises 550 residues: MAQVINTNSLSLITQNNINKNQSALSSSIERLSSGLRINSAKDDAAGQAIANRFTSNIKGLTQAARNANDGISVAQTTEGALSEINNNLQRIRELTVQASTGTNSDSDLDSIQDEIKSRLDEIDRVSGQTQFNGVNVLAKDGSMKIQVGANDGQTITIDLKKIDSDTLGLNGFNVNGGGAVANTAASKADLVAANATVVGNKYTVSAGYDAAKASDLLAGVSDGDTVQATINNGFGTAASATNYKYDSASKSYSFDTTTASAADVQKYLTPGVGDTAKGTITIDGSAQDVQISSDGKITASNGDKLYIDTTGRLTKNGSGASLTEASLSTLAANNTKATTIDIGGTSISFTGNSTTPDTITYSVTGAKVDQAAFDKAVSTSGNNVDFTTAGYSVNGTTGAVTKGVDSVYVDNNEALTTSDTVDFYLQDDGSVTNGSGKAVYKDADGKLTTDAETKAATTADPLKALDEAISSIDKFRSSLGAVQNRLDSAVTNLNNTTTNLSEAQSRIQDADYATEVSNMSKAQIIQQAGNSVLAKANQVPQQVLSLLQG.

Belongs to the bacterial flagellin family.

It localises to the secreted. Its subcellular location is the bacterial flagellum. Flagellin is the subunit protein which polymerizes to form the filaments of bacterial flagella. The protein is Flagellin (fliC) of Shigella flexneri.